The chain runs to 179 residues: Large ribosomal subunit protein uL5 (179 aa).

This sequence belongs to the universal ribosomal protein uL5 family. Part of the 50S ribosomal subunit; part of the 5S rRNA/L5/L18/L25 subcomplex. Contacts the 5S rRNA and the P site tRNA. Forms a bridge to the 30S subunit in the 70S ribosome.

This is one of the proteins that bind and probably mediate the attachment of the 5S RNA into the large ribosomal subunit, where it forms part of the central protuberance. In the 70S ribosome it contacts protein S13 of the 30S subunit (bridge B1b), connecting the 2 subunits; this bridge is implicated in subunit movement. Contacts the P site tRNA; the 5S rRNA and some of its associated proteins might help stabilize positioning of ribosome-bound tRNAs. This Listeria innocua serovar 6a (strain ATCC BAA-680 / CLIP 11262) protein is Large ribosomal subunit protein uL5.